Consider the following 34-residue polypeptide: MSDIN-like toxin proprotein 5 (34 aa).

Positions 1-10 are excised as a propeptide; sequence MSDINTARLP. Residues 11–20 constitute a cross-link (cyclopeptide (Tyr-Pro)); sequence YVVFMSFIPP. The propeptide occupies 21–34; that stretch reads CVNDDIQVVLTRGE.

Belongs to the MSDIN fungal toxin family. Post-translationally, processed by the macrocyclase-peptidase enzyme POPB to yield a toxic cyclic decapeptide. POPB first removes 10 residues from the N-terminus. Conformational trapping of the remaining peptide forces the enzyme to release this intermediate rather than proceed to macrocyclization. The enzyme rebinds the remaining peptide in a different conformation and catalyzes macrocyclization of the N-terminal 10 residues.

Probable toxin that belongs to the MSDIN-like toxin family responsible for a large number of food poisoning cases and deaths. This chain is MSDIN-like toxin proprotein 5, found in Amanita bisporigera (Destroying angel).